We begin with the raw amino-acid sequence, 161 residues long: Regulator of ribonuclease activity A (161 aa).

Belongs to the RraA family. As to quaternary structure, homotrimer. Binds to both RNA-binding sites in the C-terminal region of Rne and to RhlB.

It is found in the cytoplasm. Its function is as follows. Globally modulates RNA abundance by binding to RNase E (Rne) and regulating its endonucleolytic activity. Can modulate Rne action in a substrate-dependent manner by altering the composition of the degradosome. Modulates RNA-binding and helicase activities of the degradosome. The sequence is that of Regulator of ribonuclease activity A from Citrobacter koseri (strain ATCC BAA-895 / CDC 4225-83 / SGSC4696).